Here is a 190-residue protein sequence, read N- to C-terminus: Peptidyl-prolyl cis-trans isomerase A (190 aa).

An N-terminal signal peptide occupies residues 1-23 (MSKRILAAVVTVLSLTAFSPAFA). One can recognise a PPIase cyclophilin-type domain in the interval 26–187 (TSTHVLLTTS…KPIVIQSAKI (162 aa)).

This sequence belongs to the cyclophilin-type PPIase family.

It localises to the periplasm. It catalyses the reaction [protein]-peptidylproline (omega=180) = [protein]-peptidylproline (omega=0). Its function is as follows. PPIases accelerate the folding of proteins. It catalyzes the cis-trans isomerization of proline imidic peptide bonds in oligopeptides. This chain is Peptidyl-prolyl cis-trans isomerase A (rotA), found in Dickeya dadantii (strain 3937) (Erwinia chrysanthemi (strain 3937)).